A 337-amino-acid chain; its full sequence is UDP-3-O-acylglucosamine N-acyltransferase (337 aa).

The Proton acceptor role is filled by His-238.

Belongs to the transferase hexapeptide repeat family. LpxD subfamily. As to quaternary structure, homotrimer.

It carries out the reaction a UDP-3-O-[(3R)-3-hydroxyacyl]-alpha-D-glucosamine + a (3R)-hydroxyacyl-[ACP] = a UDP-2-N,3-O-bis[(3R)-3-hydroxyacyl]-alpha-D-glucosamine + holo-[ACP] + H(+). It functions in the pathway bacterial outer membrane biogenesis; LPS lipid A biosynthesis. Functionally, catalyzes the N-acylation of UDP-3-O-acylglucosamine using 3-hydroxyacyl-ACP as the acyl donor. Is involved in the biosynthesis of lipid A, a phosphorylated glycolipid that anchors the lipopolysaccharide to the outer membrane of the cell. This Xanthomonas campestris pv. campestris (strain 8004) protein is UDP-3-O-acylglucosamine N-acyltransferase.